The sequence spans 728 residues: Catalase-peroxidase (728 aa).

The disordered stretch occupies residues 1 to 26; the sequence is MDNPTDTAGKCPVAHGNKPRGPSNRD. The tryptophyl-tyrosyl-methioninium (Trp-Tyr) (with M-244) cross-link spans 96–218; sequence WHSAGTYRIT…LGAVQMGLIY (123 aa). The Proton acceptor role is filled by histidine 97. A cross-link (tryptophyl-tyrosyl-methioninium (Tyr-Met) (with W-96)) is located at residues 218–244; it reads YVNPEGPNGNPDPVAAARDIRETFARM. Position 259 (histidine 259) interacts with heme b.

This sequence belongs to the peroxidase family. Peroxidase/catalase subfamily. Homodimer or homotetramer. It depends on heme b as a cofactor. Formation of the three residue Trp-Tyr-Met cross-link is important for the catalase, but not the peroxidase activity of the enzyme.

The catalysed reaction is H2O2 + AH2 = A + 2 H2O. It catalyses the reaction 2 H2O2 = O2 + 2 H2O. Bifunctional enzyme with both catalase and broad-spectrum peroxidase activity. Important for stationary phase survival. The sequence is that of Catalase-peroxidase from Rhizobium etli (strain ATCC 51251 / DSM 11541 / JCM 21823 / NBRC 15573 / CFN 42).